A 91-amino-acid chain; its full sequence is Probable Fe(2+)-trafficking protein (91 aa).

Belongs to the Fe(2+)-trafficking protein family.

In terms of biological role, could be a mediator in iron transactions between iron acquisition and iron-requiring processes, such as synthesis and/or repair of Fe-S clusters in biosynthetic enzymes. In Tolumonas auensis (strain DSM 9187 / NBRC 110442 / TA 4), this protein is Probable Fe(2+)-trafficking protein.